The chain runs to 305 residues: Sulfate adenylyltransferase subunit 2 (305 aa).

This sequence belongs to the PAPS reductase family. CysD subfamily. Heterodimer composed of CysD, the smaller subunit, and CysN.

It catalyses the reaction sulfate + ATP + H(+) = adenosine 5'-phosphosulfate + diphosphate. It functions in the pathway sulfur metabolism; hydrogen sulfide biosynthesis; sulfite from sulfate: step 1/3. With CysN forms the ATP sulfurylase (ATPS) that catalyzes the adenylation of sulfate producing adenosine 5'-phosphosulfate (APS) and diphosphate, the first enzymatic step in sulfur assimilation pathway. APS synthesis involves the formation of a high-energy phosphoric-sulfuric acid anhydride bond driven by GTP hydrolysis by CysN coupled to ATP hydrolysis by CysD. In Myxococcus xanthus (strain DK1622), this protein is Sulfate adenylyltransferase subunit 2.